Here is a 242-residue protein sequence, read N- to C-terminus: Methylthioribulose-1-phosphate dehydratase (242 aa).

The interval Met1–His23 is disordered. Substrate is bound at residue Cys102. The Zn(2+) site is built by His119 and His121. Glu148 functions as the Proton donor/acceptor in the catalytic mechanism. His204 is a binding site for Zn(2+).

It belongs to the aldolase class II family. MtnB subfamily. Zn(2+) is required as a cofactor.

Its subcellular location is the cytoplasm. It catalyses the reaction 5-(methylsulfanyl)-D-ribulose 1-phosphate = 5-methylsulfanyl-2,3-dioxopentyl phosphate + H2O. The protein operates within amino-acid biosynthesis; L-methionine biosynthesis via salvage pathway; L-methionine from S-methyl-5-thio-alpha-D-ribose 1-phosphate: step 2/6. Catalyzes the dehydration of methylthioribulose-1-phosphate (MTRu-1-P) into 2,3-diketo-5-methylthiopentyl-1-phosphate (DK-MTP-1-P). The polypeptide is Methylthioribulose-1-phosphate dehydratase (Uncinocarpus reesii (strain UAMH 1704)).